Consider the following 439-residue polypeptide: Rhodopsin (439 aa).

Residue Asn-1 is glycosylated (N-linked (GlcNAc...) asparagine). The Extracellular segment spans residues Asn-1–Val-26. A helical transmembrane segment spans residues Tyr-27–Leu-51. Over Phe-52–Asn-63 the chain is Cytoplasmic. A helical transmembrane segment spans residues Met-64–Phe-90. The Extracellular portion of the chain corresponds to Leu-91–Lys-102. Residues Cys-101 and Cys-179 are joined by a disulfide bond. The chain crosses the membrane as a helical span at residues Val-103–Ile-124. Residues Asp-125 to Tyr-127 carry the 'Ionic lock' involved in activated form stabilization motif. The Cytoplasmic segment spans residues Asp-125–Lys-144. The helical transmembrane segment at Ala-145–Phe-165 threads the bilayer. The Extracellular segment spans residues Gly-166–Ser-192. A helical membrane pass occupies residues Asn-193–Val-217. Topologically, residues Met-218–Lys-254 are cytoplasmic. Residues Ile-255–Leu-276 traverse the membrane as a helical segment. At Ala-277–Thr-286 the chain is on the extracellular side. Residues Pro-287 to Tyr-308 form a helical membrane-spanning segment. Lys-298 carries the N6-(retinylidene)lysine modification. Over Ser-309–Asp-439 the chain is Cytoplasmic. S-palmitoyl cysteine attachment occurs at residues Cys-329 and Cys-330. Low complexity predominate over residues Met-369 to Pro-381. A disordered region spans residues Met-369 to Asp-439. Over residues Ala-382–Ala-433 the composition is skewed to pro residues.

It belongs to the G-protein coupled receptor 1 family. Opsin subfamily. Contains one covalently linked retinal chromophore. Upon light absorption, the covalently bound 11-cis-retinal is converted to all-trans-retinal. After hydrolysis of the Schiff base and release of the covalently bound all-trans-retinal, active rhodopsin is regenerated by binding of a fresh molecule of 11-cis-retinal.

It localises to the cell projection. Its subcellular location is the rhabdomere membrane. Functionally, photoreceptor required for image-forming vision at low light intensity. Light-induced isomerization of 11-cis to all-trans retinal triggers a conformational change that activates signaling via G-proteins. Signaling mediates the activation of phospholipase C. Subsequent receptor phosphorylation mediates displacement of the bound G-protein alpha subunit by arrestin and terminates signaling. This is Rhodopsin (RHO) from Alloteuthis subulata (Squid).